The following is a 488-amino-acid chain: Multidrug resistance outer membrane protein MdtP (488 aa).

An N-terminal signal peptide occupies residues 1–23 (MINRQLSRLLLCSILGSTTLISG). Residue Cys-24 is the site of N-palmitoyl cysteine attachment. Cys-24 carries the S-diacylglycerol cysteine lipid modification.

This sequence belongs to the outer membrane factor (OMF) (TC 1.B.17) family. In terms of assembly, could be part of a tripartite efflux system composed of MdtN, MdtO and MdtP.

It localises to the cell outer membrane. Functionally, could be involved in resistance to puromycin, acriflavine and tetraphenylarsonium chloride. This Escherichia coli (strain K12) protein is Multidrug resistance outer membrane protein MdtP (mdtP).